A 429-amino-acid polypeptide reads, in one-letter code: Glutamate-1-semialdehyde 2,1-aminomutase 2 (429 aa).

Position 267 is an N6-(pyridoxal phosphate)lysine (K267).

This sequence belongs to the class-III pyridoxal-phosphate-dependent aminotransferase family. HemL subfamily. As to quaternary structure, homodimer. It depends on pyridoxal 5'-phosphate as a cofactor.

Its subcellular location is the cytoplasm. It catalyses the reaction (S)-4-amino-5-oxopentanoate = 5-aminolevulinate. The protein operates within porphyrin-containing compound metabolism; protoporphyrin-IX biosynthesis; 5-aminolevulinate from L-glutamyl-tRNA(Glu): step 2/2. This is Glutamate-1-semialdehyde 2,1-aminomutase 2 from Brevibacillus brevis (strain 47 / JCM 6285 / NBRC 100599).